Consider the following 864-residue polypeptide: Structure-specific endonuclease subunit SLX4 (864 aa).

Residues 35–54 (SPLSLPSPTSLLDFLSTSTS) show a composition bias toward low complexity. Disordered stretches follow at residues 35 to 72 (SPLSLPSPTSLLDFLSTSTSRGPARSDTDGDKTQGKEV), 89 to 113 (VVSGTGGKAATGKKLKRRTESPGNA), 160 to 193 (KANQTVSLQPETKKSAPKGCNDTTQPAENGHIND), 288 to 318 (GLSDSRQSSITEDSESATSKPRRVKAKNPPK), 348 to 382 (LSDEPGKEKNVAKRTSGARYAKPGRKKSATTEKKN), 413 to 432 (ANGHSEDQHEQNEGTSHISN), and 625 to 771 (KTSN…ETLP). Residues 58-72 (ARSDTDGDKTQGKEV) show a composition bias toward basic and acidic residues. Composition is skewed to polar residues over residues 160 to 169 (KANQTVSLQP) and 289 to 306 (LSDSRQSSITEDSESATS). Over residues 307 to 317 (KPRRVKAKNPP) the composition is skewed to basic residues. The span at 659–668 (SIPQTATTQV) shows a compositional bias: polar residues. The segment covering 683–695 (VPVPSRRSTSTSK) has biased composition (low complexity). Over residues 743–771 (PESFNLPTTPLTIRSGKIPSTGTASETLP) the composition is skewed to polar residues.

It belongs to the SLX4 family. In terms of assembly, forms a heterodimer with SLX1. Phosphorylated in response to DNA damage.

It is found in the nucleus. Regulatory subunit of the SLX1-SLX4 structure-specific endonuclease that resolves DNA secondary structures generated during DNA repair and recombination. Has endonuclease activity towards branched DNA substrates, introducing single-strand cuts in duplex DNA close to junctions with ss-DNA. This Paracoccidioides brasiliensis (strain Pb03) protein is Structure-specific endonuclease subunit SLX4.